The sequence spans 555 residues: Glutamine--tRNA ligase (555 aa).

The 'HIGH' region signature appears at proline 34–histidine 44. ATP is bound by residues glutamate 35 to asparagine 37 and histidine 41 to serine 47. L-glutamine-binding residues include aspartate 67 and tyrosine 212. ATP is bound by residues threonine 231, arginine 261–leucine 262, and leucine 269–lysine 271. A 'KMSKS' region motif is present at residues valine 268 to arginine 272.

This sequence belongs to the class-I aminoacyl-tRNA synthetase family. Monomer.

The protein resides in the cytoplasm. It catalyses the reaction tRNA(Gln) + L-glutamine + ATP = L-glutaminyl-tRNA(Gln) + AMP + diphosphate. The polypeptide is Glutamine--tRNA ligase (Alteromonas mediterranea (strain DSM 17117 / CIP 110805 / LMG 28347 / Deep ecotype)).